We begin with the raw amino-acid sequence, 195 residues long: Chromophore lyase CpcT/CpeT 2 (195 aa).

The protein belongs to the CpcT/CpeT biliprotein lyase family.

Covalently attaches a chromophore to Cys residue(s) of phycobiliproteins. This chain is Chromophore lyase CpcT/CpeT 2, found in Trichodesmium erythraeum (strain IMS101).